We begin with the raw amino-acid sequence, 142 residues long: Large-conductance mechanosensitive channel (142 aa).

The next 2 helical transmembrane spans lie at 14–34 (VMDLAVGVIIGAAFSKIVDSV) and 82–102 (GNFITVFINFLILAWIIFLLI).

It belongs to the MscL family. Homopentamer.

It is found in the cell inner membrane. Its function is as follows. Channel that opens in response to stretch forces in the membrane lipid bilayer. May participate in the regulation of osmotic pressure changes within the cell. The polypeptide is Large-conductance mechanosensitive channel (Sinorhizobium medicae (strain WSM419) (Ensifer medicae)).